We begin with the raw amino-acid sequence, 2069 residues long: Dedicator of cytokinesis protein 9 (2069 aa).

A phosphoserine mark is found at Ser-21, Ser-32, Ser-167, and Ser-170. The PH domain occupies 174 to 281; sequence GITKHGWLYK…WITILNKILQ (108 aa). Residues 290-313 are disordered; that stretch reads EKRNGDSHEDDEQSKLEGSGSGLD. Ser-433 and Ser-443 each carry phosphoserine. In terms of domain architecture, C2 DOCK-type spans 640 to 818; that stretch reads TNHLYVYPKY…PLLKISTHLV (179 aa). A phosphoserine mark is found at Ser-927 and Ser-1235. Residue Thr-1241 is modified to Phosphothreonine. Residues 1241–1282 form a disordered region; the sequence is TPNINSVRNADSRGSLISTDSGNSLPERNSEKSNSLDKHQQS. 3 positions are modified to phosphoserine: Ser-1255, Ser-1261, and Ser-1264. A compositionally biased stretch (polar residues) spans 1255 to 1267; that stretch reads SLISTDSGNSLPE. Over residues 1268-1280 the composition is skewed to basic and acidic residues; sequence RNSEKSNSLDKHQ. The DOCKER domain maps to 1605 to 2069; that stretch reads KSYASTPELR…LSEIMHEQLG (465 aa). Residues 1693–2069 form an interaction with CDC42 region; it reads DEEASMMEDV…LSEIMHEQLG (377 aa). Coiled coils occupy residues 1948–1982 and 2034–2067; these read IEVA…KLQG and NERL…MHEQ.

It belongs to the DOCK family. As to quaternary structure, homodimer. Interacts preferentially with nucleotide-depleted CDC42. Widely expressed, with highest expression in heart and placenta. Expressed at intermediate level in kidney, brain, lung and skeletal muscle.

The protein resides in the endomembrane system. In terms of biological role, guanine nucleotide-exchange factor (GEF) that activates CDC42 by exchanging bound GDP for free GTP. Overexpression induces filopodia formation. The chain is Dedicator of cytokinesis protein 9 from Homo sapiens (Human).